The sequence spans 297 residues: Thiosulfate sulfurtransferase (297 aa).

Lysine 14 is modified (N6-acetyllysine; alternate). Lysine 14 carries the post-translational modification N6-succinyllysine; alternate. Positions 25 to 143 (LGPSLRVLDA…WLKEGHPVTS (119 aa)) constitute a Rhodanese 1 domain. Serine 35 carries O-linked (GlcNAc) serine glycosylation. Serine 38 carries the phosphoserine modification. N6-acetyllysine; alternate is present on lysine 136. N6-succinyllysine; alternate is present on lysine 136. The tract at residues 144–159 (EPSRPEPAVFKATLNL) is hinge. Lysine 163 is modified (N6-acetyllysine). Positions 173-288 (QSKRFQLVDS…WFRRAPPETR (116 aa)) constitute a Rhodanese 2 domain. Lysine 175 carries the post-translational modification N6-acetyllysine; alternate. The residue at position 175 (lysine 175) is an N6-succinyllysine; alternate. Arginine 187 contributes to the substrate binding site. Residues lysine 219 and lysine 224 each carry the N6-acetyllysine; alternate modification. N6-succinyllysine; alternate occurs at positions 219 and 224. Position 236 is an N6-acetyllysine (lysine 236). The residue at position 237 (lysine 237) is an N6-acetyllysine; alternate. An N6-succinyllysine; alternate modification is found at lysine 237. Cysteine 248 acts as the Cysteine persulfide intermediate in catalysis. Lysine 250 serves as a coordination point for substrate.

In terms of assembly, monomer. Expressed in numerous tissues.

It is found in the mitochondrion matrix. It carries out the reaction thiosulfate + hydrogen cyanide = thiocyanate + sulfite + 2 H(+). Together with MRPL18, acts as a mitochondrial import factor for the cytosolic 5S rRNA. Only the nascent unfolded cytoplasmic form is able to bind to the 5S rRNA. Formation of iron-sulfur complexes and cyanide detoxification. This chain is Thiosulfate sulfurtransferase (Tst), found in Mus musculus (Mouse).